We begin with the raw amino-acid sequence, 578 residues long: Potassium-transporting ATPase potassium-binding subunit (578 aa).

11 helical membrane-spanning segments follow: residues 3–23 (AAAL…AVPL), 67–87 (AAAA…LERL), 95–115 (PAGL…SFAT), 136–156 (ALTV…AALV), 181–201 (LLLP…VPQT), 264–284 (LEAL…GALV), 291–311 (WTVY…TVSA), 396–416 (GLYG…LMVG), 436–456 (LAIL…CLLP), 504–524 (VAML…AGAF), and 543–563 (LFAG…FLPA).

Belongs to the KdpA family. As to quaternary structure, the system is composed of three essential subunits: KdpA, KdpB and KdpC.

It is found in the cell inner membrane. Functionally, part of the high-affinity ATP-driven potassium transport (or Kdp) system, which catalyzes the hydrolysis of ATP coupled with the electrogenic transport of potassium into the cytoplasm. This subunit binds the periplasmic potassium ions and delivers the ions to the membrane domain of KdpB through an intramembrane tunnel. The protein is Potassium-transporting ATPase potassium-binding subunit of Anaeromyxobacter dehalogenans (strain 2CP-C).